A 65-amino-acid polypeptide reads, in one-letter code: Large ribosomal subunit protein bL35 (65 aa).

Belongs to the bacterial ribosomal protein bL35 family.

The chain is Large ribosomal subunit protein bL35 from Baumannia cicadellinicola subsp. Homalodisca coagulata.